The sequence spans 579 residues: Maintenance of mitochondrial morphology protein 1 (579 aa).

The Lumenal portion of the chain corresponds to Met-1–Gly-43. The helical transmembrane segment at Leu-44–Phe-64 threads the bilayer. At Glu-65–Gln-579 the chain is on the cytoplasmic side. The 242-residue stretch at Leu-150 to Pro-391 folds into the SMP-LTD domain. 3 disordered regions span residues Val-309–His-332, Arg-460–Arg-479, and Ser-558–Gln-579. 2 stretches are compositionally biased toward low complexity: residues Pro-311–Pro-328 and Ser-465–Ser-476.

The protein belongs to the MMM1 family. As to quaternary structure, homodimer. Component of the ER-mitochondria encounter structure (ERMES) or MDM complex, composed of MMM1, MDM10, MDM12 and MDM34. An MMM1 homodimer associates with one molecule of MDM12 on each side in a pairwise head-to-tail manner, and the SMP-LTD domains of MMM1 and MDM12 generate a continuous hydrophobic tunnel for phospholipid trafficking.

It localises to the endoplasmic reticulum membrane. In terms of biological role, component of the ERMES/MDM complex, which serves as a molecular tether to connect the endoplasmic reticulum (ER) and mitochondria. Components of this complex are involved in the control of mitochondrial shape and protein biogenesis, and function in nonvesicular lipid trafficking between the ER and mitochondria. The MDM12-MMM1 subcomplex functions in the major beta-barrel assembly pathway that is responsible for biogenesis of all outer membrane beta-barrel proteins, and acts in a late step after the SAM complex. The MDM10-MDM12-MMM1 subcomplex further acts in the TOM40-specific pathway after the action of the MDM12-MMM1 complex. Essential for establishing and maintaining the structure of mitochondria and maintenance of mtDNA nucleoids. This is Maintenance of mitochondrial morphology protein 1 from Mycosarcoma maydis (Corn smut fungus).